We begin with the raw amino-acid sequence, 471 residues long: 5-hydroxytryptamine receptor 2B (471 aa).

Topologically, residues 1–26 (MFQAAVGPLQTNISLPEETPGLELNW) are extracellular. The N-linked (GlcNAc...) asparagine glycan is linked to Asn12. A helical transmembrane segment spans residues 27-49 (AALLIVMVIIPTIGGNILVILAV). Topologically, residues 50 to 60 (WLEKKLQNATN) are cytoplasmic. The helical transmembrane segment at 61-83 (FFLMSLAVADLLVGLLVMPIALI) threads the bilayer. Topologically, residues 84 to 99 (TILYDSDWPLPEPLCP) are extracellular. Cys98 and Cys182 form a disulfide bridge. Residues 100-121 (IWLFLDVLFSTASIMHLCAISL) form a helical membrane-spanning segment. Ergotamine-binding residues include Asp105 and Thr110. Positions 122–124 (DRY) match the DRY motif; important for ligand-induced conformation changes motif. Residues 122 to 141 (DRYIAIKKPIQHSQYKSRAK) lie on the Cytoplasmic side of the membrane. A helical membrane pass occupies residues 142-162 (VMLKIALVWLISICIAIPIPI). Residues 163–191 (KGLRNYPHPNNITFTSNHTCVLKTDTFQE) are Extracellular-facing. 2 N-linked (GlcNAc...) asparagine glycosylation sites follow: Asn173 and Asn179. Position 184 (Leu184) interacts with ergotamine. The [DE]RFG motif; may stabilize a conformation that preferentially activates signaling via beta-arrestin family members signature appears at 187–190 (DTFQ). The chain crosses the membrane as a helical span at residues 192–214 (FIIFGSLVAFFIPLTIMMIIYFL). Residues 215-308 (TVRVLRKKVY…TLTNEQRASK (94 aa)) lie on the Cytoplasmic side of the membrane. A helical membrane pass occupies residues 309-329 (VLGIVFLLFVVMWCPFFITNI). Residues 330–344 (TSALCGPCDANIIGR) lie on the Extracellular side of the membrane. Cys334 and Cys337 are disulfide-bonded. A helical membrane pass occupies residues 345 to 366 (LMEIFSWVGYVSSGINPLVYTL). Residues 360–364 (NPLVY) carry the NPxxY motif; important for ligand-induced conformation changes and signaling motif. Topologically, residues 367–471 (FNKTFRQAFT…CKQEERVSCV (105 aa)) are cytoplasmic. The S-palmitoyl cysteine moiety is linked to residue Cys381. The PDZ-binding motif lies at 469–471 (SCV).

This sequence belongs to the G-protein coupled receptor 1 family. Detected in brain, heart and gut.

It is found in the cell membrane. The protein resides in the synapse. The protein localises to the synaptosome. Functionally, G-protein coupled receptor for 5-hydroxytryptamine (serotonin). Also functions as a receptor for various ergot alkaloid derivatives and psychoactive substances. Ligand binding causes a conformation change that triggers signaling via guanine nucleotide-binding proteins (G proteins) and modulates the activity of downstream effectors. HTR2B is coupled to G(q)/G(11) G alpha proteins and activates phospholipase C-beta, releasing diacylglycerol (DAG) and inositol 1,4,5-trisphosphate (IP3) second messengers that modulate the activity of phosphatidylinositol 3-kinase and promote the release of Ca(2+) ions from intracellular stores, respectively. Beta-arrestin family members inhibit signaling via G proteins and mediate activation of alternative signaling pathways. Plays a role in the regulation of dopamine and 5-hydroxytryptamine release, 5-hydroxytryptamine uptake and in the regulation of extracellular dopamine and 5-hydroxytryptamine levels, and thereby affects neural activity. The sequence is that of 5-hydroxytryptamine receptor 2B (htr2b) from Dichotomyctere fluviatilis (Green pufferfish).